The primary structure comprises 269 residues: C-type lectin domain family 2 member G (269 aa).

Residues 1–107 (MNITRASLPM…SPESSAKLYC (107 aa)) lie on the Cytoplasmic side of the membrane. The chain crosses the membrane as a helical; Signal-anchor for type II membrane protein span at residues 108-128 (CCGVIMVLTVAVVALSVALPA). Over 129–269 (TKTEQILINK…SLHCPTPVPV (141 aa)) the chain is Extracellular. The C-type lectin domain maps to 150–254 (VGNKCFYFSE…HYIPRIWICS (105 aa)). N163 carries an N-linked (GlcNAc...) asparagine glycan. C171 and C253 form a disulfide bridge.

Detected in vagina, eye, tongue, stomach and spleen.

The protein localises to the cell membrane. In terms of biological role, inhibits osteoclast formation. In Mus musculus (Mouse), this protein is C-type lectin domain family 2 member G (Clec2g).